A 251-amino-acid polypeptide reads, in one-letter code: Ditrans,polycis-undecaprenyl-diphosphate synthase ((2E,6E)-farnesyl-diphosphate specific) (251 aa).

Aspartate 21 is a catalytic residue. Residue aspartate 21 coordinates Mg(2+). Substrate is bound by residues 22-25 (GNNR), tryptophan 26, histidine 38, and 66-68 (SSE). Asparagine 69 (proton acceptor) is an active-site residue. Residues tryptophan 70, arginine 72, arginine 189, and 195 to 197 (RIS) each bind substrate. Glutamate 208 contacts Mg(2+).

This sequence belongs to the UPP synthase family. As to quaternary structure, homodimer. Mg(2+) is required as a cofactor.

It catalyses the reaction 8 isopentenyl diphosphate + (2E,6E)-farnesyl diphosphate = di-trans,octa-cis-undecaprenyl diphosphate + 8 diphosphate. Functionally, catalyzes the sequential condensation of isopentenyl diphosphate (IPP) with (2E,6E)-farnesyl diphosphate (E,E-FPP) to yield (2Z,6Z,10Z,14Z,18Z,22Z,26Z,30Z,34E,38E)-undecaprenyl diphosphate (di-trans,octa-cis-UPP). UPP is the precursor of glycosyl carrier lipid in the biosynthesis of bacterial cell wall polysaccharide components such as peptidoglycan and lipopolysaccharide. This Pseudomonas syringae pv. tomato (strain ATCC BAA-871 / DC3000) protein is Ditrans,polycis-undecaprenyl-diphosphate synthase ((2E,6E)-farnesyl-diphosphate specific).